A 163-amino-acid polypeptide reads, in one-letter code: Phosphopantetheine adenylyltransferase (163 aa).

Thr10 provides a ligand contact to substrate. Residues 10–11 (TF) and His18 each bind ATP. Positions 42, 74, and 88 each coordinate substrate. ATP contacts are provided by residues 89–91 (GLR), Glu99, and 124–130 (NSFISST).

This sequence belongs to the bacterial CoaD family. As to quaternary structure, homohexamer. Mg(2+) is required as a cofactor.

It is found in the cytoplasm. The enzyme catalyses (R)-4'-phosphopantetheine + ATP + H(+) = 3'-dephospho-CoA + diphosphate. It functions in the pathway cofactor biosynthesis; coenzyme A biosynthesis; CoA from (R)-pantothenate: step 4/5. Functionally, reversibly transfers an adenylyl group from ATP to 4'-phosphopantetheine, yielding dephospho-CoA (dPCoA) and pyrophosphate. The chain is Phosphopantetheine adenylyltransferase from Shewanella baltica (strain OS195).